The primary structure comprises 168 residues: Cell division inhibitor SulA (168 aa).

The interval 106–112 (ALLTGNY) is ftsZ binding. The interval 161–168 (KIHSSLYH) is lon protease binding.

The protein belongs to the SulA family. Interacts with FtsZ. Post-translationally, is rapidly cleaved and degraded by the Lon protease once DNA damage is repaired.

Functionally, component of the SOS system and an inhibitor of cell division. Accumulation of SulA causes rapid cessation of cell division and the appearance of long, non-septate filaments. In the presence of GTP, binds a polymerization-competent form of FtsZ in a 1:1 ratio, thus inhibiting FtsZ polymerization and therefore preventing it from participating in the assembly of the Z ring. This mechanism prevents the premature segregation of damaged DNA to daughter cells during cell division. In Yersinia enterocolitica serotype O:8 / biotype 1B (strain NCTC 13174 / 8081), this protein is Cell division inhibitor SulA.